Reading from the N-terminus, the 55-residue chain is Large ribosomal subunit protein bL33 (55 aa).

The protein belongs to the bacterial ribosomal protein bL33 family. Part of the 50S ribosomal subunit. Contacts protein L35.

Functionally, binds the 23S rRNA and the E site tRNA. The chain is Large ribosomal subunit protein bL33 (rpmG) from Deinococcus radiodurans (strain ATCC 13939 / DSM 20539 / JCM 16871 / CCUG 27074 / LMG 4051 / NBRC 15346 / NCIMB 9279 / VKM B-1422 / R1).